Reading from the N-terminus, the 487-residue chain is V-type proton ATPase subunit B3 (487 aa).

Belongs to the ATPase alpha/beta chains family. In terms of assembly, V-ATPase is a heteromultimeric enzyme composed of a peripheral catalytic V1 complex (components A to H) attached to an integral membrane V0 proton pore complex (components: a, c, c'', d and e).

It is found in the vacuole membrane. Functionally, non-catalytic subunit of the peripheral V1 complex of vacuolar ATPase. V-ATPase is responsible for acidifying a variety of intracellular compartments in eukaryotic cells. This chain is V-type proton ATPase subunit B3 (VHA-B3), found in Arabidopsis thaliana (Mouse-ear cress).